The following is a 368-amino-acid chain: tRNA(Met) cytidine acetate ligase (368 aa).

Residues 7–20 (IAEF…HKYL), G96, N152, and R175 each bind ATP.

It belongs to the TmcAL family.

Its subcellular location is the cytoplasm. The enzyme catalyses cytidine(34) in elongator tRNA(Met) + acetate + ATP = N(4)-acetylcytidine(34) in elongator tRNA(Met) + AMP + diphosphate. In terms of biological role, catalyzes the formation of N(4)-acetylcytidine (ac(4)C) at the wobble position of elongator tRNA(Met), using acetate and ATP as substrates. First activates an acetate ion to form acetyladenylate (Ac-AMP) and then transfers the acetyl group to tRNA to form ac(4)C34. In Streptococcus pyogenes serotype M3 (strain SSI-1), this protein is tRNA(Met) cytidine acetate ligase.